Reading from the N-terminus, the 1019-residue chain is Collagen alpha-1(VI) chain (1019 aa).

The signal sequence occupies residues 1–19 (MGLHDSFLALLLLLGGAWA). In terms of domain architecture, VWFA 1 spans 37–233 (DLFFVLDTSE…LDVEETINNI (197 aa)). N-linked (GlcNAc...) asparagine glycosylation occurs at Asn-212. The tract at residues 248 to 588 (FECHPPRGPP…GPPGPVGPPG (341 aa)) is disordered. A compositionally biased stretch (pro residues) spans 253–262 (PRGPPGPPGD). 2 stretches are compositionally biased toward basic and acidic residues: residues 299–332 (KGDK…DGMK) and 370–380 (GKGEPGEDGKP). The segment covering 427-436 (ERGPPGSPGD) has biased composition (low complexity). The Cell attachment site signature appears at 476-478 (RGD). The N-linked (GlcNAc...) asparagine glycan is linked to Asn-514. The short motif at 529 to 531 (RGD) is the Cell attachment site element. Asn-535 carries an N-linked (GlcNAc...) asparagine glycan. Positions 577 to 588 (RPGPPGPVGPPG) are enriched in pro residues. VWFA domains lie at 613–800 (DLLF…LQNI) and 824–1012 (DIML…YQTV). N-linked (GlcNAc...) asparagine glycosylation is found at Asn-799 and Asn-887.

This sequence belongs to the type VI collagen family. In terms of assembly, trimers composed of three different chains: alpha 1(VI), alpha 2(VI), and alpha 3(VI). In terms of processing, prolines at the third position of the tripeptide repeating unit (G-X-Y) are hydroxylated in some or all of the chains.

The protein localises to the secreted. It is found in the extracellular space. Its subcellular location is the extracellular matrix. Collagen VI acts as a cell-binding protein. In Gallus gallus (Chicken), this protein is Collagen alpha-1(VI) chain (COL6A1).